The sequence spans 286 residues: Shikimate dehydrogenase (NADP(+)) (286 aa).

Shikimate contacts are provided by residues 22-24 (SRS) and T71. Catalysis depends on K75, which acts as the Proton acceptor. E87 serves as a coordination point for NADP(+). 2 residues coordinate shikimate: N96 and D111. NADP(+)-binding positions include 136–140 (GAGGA), 160–165 (NRTAAR), and I225. Y227 is a binding site for shikimate. G248 contacts NADP(+).

The protein belongs to the shikimate dehydrogenase family. Homodimer.

The enzyme catalyses shikimate + NADP(+) = 3-dehydroshikimate + NADPH + H(+). It functions in the pathway metabolic intermediate biosynthesis; chorismate biosynthesis; chorismate from D-erythrose 4-phosphate and phosphoenolpyruvate: step 4/7. Involved in the biosynthesis of the chorismate, which leads to the biosynthesis of aromatic amino acids. Catalyzes the reversible NADPH linked reduction of 3-dehydroshikimate (DHSA) to yield shikimate (SA). The sequence is that of Shikimate dehydrogenase (NADP(+)) from Sinorhizobium fredii (strain NBRC 101917 / NGR234).